Consider the following 462-residue polypeptide: Argininosuccinate lyase (462 aa).

This sequence belongs to the lyase 1 family. Argininosuccinate lyase subfamily.

The protein localises to the cytoplasm. It catalyses the reaction 2-(N(omega)-L-arginino)succinate = fumarate + L-arginine. It participates in amino-acid biosynthesis; L-arginine biosynthesis; L-arginine from L-ornithine and carbamoyl phosphate: step 3/3. The sequence is that of Argininosuccinate lyase from Streptococcus agalactiae serotype III (strain NEM316).